The sequence spans 313 residues: Porphobilinogen deaminase (313 aa).

Cys-242 is modified (S-(dipyrrolylmethanemethyl)cysteine).

This sequence belongs to the HMBS family. In terms of assembly, monomer. Requires dipyrromethane as cofactor.

It catalyses the reaction 4 porphobilinogen + H2O = hydroxymethylbilane + 4 NH4(+). It participates in porphyrin-containing compound metabolism; protoporphyrin-IX biosynthesis; coproporphyrinogen-III from 5-aminolevulinate: step 2/4. Its function is as follows. Tetrapolymerization of the monopyrrole PBG into the hydroxymethylbilane pre-uroporphyrinogen in several discrete steps. The protein is Porphobilinogen deaminase of Pectobacterium atrosepticum (strain SCRI 1043 / ATCC BAA-672) (Erwinia carotovora subsp. atroseptica).